The primary structure comprises 357 residues: Probable RNA methyltransferase Daro_1157 (357 aa).

Catalysis depends on Glu91, which acts as the Proton acceptor. Residues 94 to 320 enclose the Radical SAM core domain; that stretch reads LLPRDGLCIS…TTVRNSAGQD (227 aa). Cys101 and Cys325 form a disulfide bridge. [4Fe-4S] cluster-binding residues include Cys108, Cys112, and Cys115. Residues 153–154, Ser183, 206–208, and Asn282 contribute to the S-adenosyl-L-methionine site; these read GE and SLH. The active-site S-methylcysteine intermediate is the Cys325.

The protein belongs to the radical SAM superfamily. RlmN family. The cofactor is [4Fe-4S] cluster.

The protein localises to the cytoplasm. This is Probable RNA methyltransferase Daro_1157 from Dechloromonas aromatica (strain RCB).